Reading from the N-terminus, the 76-residue chain is Conotoxin VnMEKL-012 (76 aa).

Residues 1–18 form the signal peptide; it reads MKLTILFLVAAVLMSTQA. A propeptide spanning residues 19 to 42 is cleaved from the precursor; sequence LIQHDGEKSQKAKMKFLTARTLSA. Intrachain disulfides connect Cys-49-Cys-65, Cys-56-Cys-70, and Cys-64-Cys-74.

It belongs to the conotoxin O2 superfamily. Expressed by the venom duct.

It localises to the secreted. In Conus ventricosus (Mediterranean cone), this protein is Conotoxin VnMEKL-012.